The chain runs to 98 residues: Keratin, high sulfur matrix protein, IIIB3 (98 aa).

At A1 the chain carries N-acetylalanine.

It belongs to the KRTAP type 3 family. In terms of assembly, interacts with wool keratins. Wool.

In the wool cortex, wool keratin intermediate filaments are embedded in an interfilamentous matrix, consisting of hair keratin-associated proteins (KRTAP), which are essential for the formation of a rigid and resistant wool shaft through their extensive disulfide bond cross-linking with abundant cysteine residues of wool keratins. The matrix proteins include the high-sulfur and high-glycine-tyrosine keratins. The polypeptide is Keratin, high sulfur matrix protein, IIIB3 (Ovis aries (Sheep)).